We begin with the raw amino-acid sequence, 169 residues long: Probable metallophosphoesterase YsnB (169 aa).

Mn(2+)-binding residues include Asp8, His10, Asp35, Asn54, His78, His107, and His109.

This sequence belongs to the metallophosphoesterase superfamily. YfcE family. Requires Mn(2+) as cofactor.

The sequence is that of Probable metallophosphoesterase YsnB (ysnB) from Bacillus subtilis (strain 168).